Consider the following 157-residue polypeptide: Small ribosomal subunit protein uS7 (157 aa).

It belongs to the universal ribosomal protein uS7 family. As to quaternary structure, part of the 30S ribosomal subunit. Contacts proteins S9 and S11.

Functionally, one of the primary rRNA binding proteins, it binds directly to 16S rRNA where it nucleates assembly of the head domain of the 30S subunit. Is located at the subunit interface close to the decoding center, probably blocks exit of the E-site tRNA. The protein is Small ribosomal subunit protein uS7 of Phenylobacterium zucineum (strain HLK1).